We begin with the raw amino-acid sequence, 406 residues long: uncharacterized protein (406 aa).

This is an uncharacterized protein from Acanthamoeba polyphaga mimivirus (APMV).